The following is a 174-amino-acid chain: Crossover junction endodeoxyribonuclease RuvC (174 aa).

Active-site residues include aspartate 8, glutamate 67, and aspartate 139. Aspartate 8, glutamate 67, and aspartate 139 together coordinate Mg(2+).

The protein belongs to the RuvC family. As to quaternary structure, homodimer which binds Holliday junction (HJ) DNA. The HJ becomes 2-fold symmetrical on binding to RuvC with unstacked arms; it has a different conformation from HJ DNA in complex with RuvA. In the full resolvosome a probable DNA-RuvA(4)-RuvB(12)-RuvC(2) complex forms which resolves the HJ. Mg(2+) serves as cofactor.

The protein localises to the cytoplasm. The enzyme catalyses Endonucleolytic cleavage at a junction such as a reciprocal single-stranded crossover between two homologous DNA duplexes (Holliday junction).. The RuvA-RuvB-RuvC complex processes Holliday junction (HJ) DNA during genetic recombination and DNA repair. Endonuclease that resolves HJ intermediates. Cleaves cruciform DNA by making single-stranded nicks across the HJ at symmetrical positions within the homologous arms, yielding a 5'-phosphate and a 3'-hydroxyl group; requires a central core of homology in the junction. The consensus cleavage sequence is 5'-(A/T)TT(C/G)-3'. Cleavage occurs on the 3'-side of the TT dinucleotide at the point of strand exchange. HJ branch migration catalyzed by RuvA-RuvB allows RuvC to scan DNA until it finds its consensus sequence, where it cleaves and resolves the cruciform DNA. In Pseudomonas paraeruginosa (strain DSM 24068 / PA7) (Pseudomonas aeruginosa (strain PA7)), this protein is Crossover junction endodeoxyribonuclease RuvC.